A 726-amino-acid polypeptide reads, in one-letter code: MDTFITKNFQTTIIQKAKNTMAEFSEDPELQPAVLFNICVHLEVCYVISDMNFLDEEGKTYTALEGQGKEQNLRPQYEVIEGMPRNIAWMVQRSLAQEHGIETPRYLADLFDYKTKRFIEVGITKGLADDYFWKKKEKLGNSMELMIFSYNQDYSLSDESSLDEEGKGRVLSRLTELQAELSLKNLWQVLIGEEEIEKGIDFKLGQTISKLRNISVPAGFSNFEGMRSYIDNIDPKGAIERNLARMSPLVSVTPKKLKWEDLRPIGPHIYNHELPEVPYNAFLLMSDELGLANMTEGKSKKPKTLAKECLERYSTLRDQTDPILIMKSEKANENFLWRLWRDCVNTISNEETGNELQKTNYAKWATGDGLTYQKIMKEVAIDDETMYQEEPKIPNKCRVAAWVQAEMNLLSTLTSKRALDLPEIGPDVAPVEHVGSERRKYFVNEINYCKASTVMMKYVLFHTSLLNESNASMGKYKVIPITNRVVNEKGESFDMLYGLAVKGQSHLRGDTDVVTVVTFEFSSTDPRVDSGKWPKYTVFKIGSLFVSGREKPVYLYCRVNGTNKIQMKWGMEARRCLLQSMQQMEAIVDQESSIQGYDMTKACFKGDRVNNPKTFSIGTQEGKLVKGSFGKALRVIFTKCLMHYVFGNAQLEGFSAESRRLLLLIQALKDRKGPWVFDLEGMYFGVEECISNNPWVIQSAYWFNEWLGIEKEGSKVLESIDEIMDE.

His-41, Glu-81, Asp-109, Glu-120, and Val-121 together coordinate Mn(2+). Residues 125–140 carry the Nuclear localization signal 1 (NLS1) motif; sequence KGLADDYFWKKKEKLG. Residues 183–244 carry the Nuclear localization signal 2 (NLS2) motif; the sequence is LKNLWQVLIG…PKGAIERNLA (62 aa).

It belongs to the influenza viruses PA family. As to quaternary structure, influenza RNA polymerase is composed of three subunits: PB1, PB2 and PA. Interacts (via C-terminus) with PB1 (via N-terminus). Mn(2+) serves as cofactor. In terms of processing, phosphorylated on serines and threonines by host kinases, including human casein kinase II.

The protein localises to the host cytoplasm. It localises to the host nucleus. In terms of biological role, plays an essential role in viral RNA transcription and replication by forming the heterotrimeric polymerase complex together with PB1 and PB2 subunits. The complex transcribes viral mRNAs by using a unique mechanism called cap-snatching. It consists in the hijacking and cleavage of host capped pre-mRNAs. These short capped RNAs are then used as primers for viral mRNAs. The PB2 subunit is responsible for the binding of the 5' cap of cellular pre-mRNAs which are subsequently cleaved after 10-13 nucleotides by the PA subunit that carries the endonuclease activity. In Influenza B virus (strain B/Lee/1940), this protein is Polymerase acidic protein.